The sequence spans 438 residues: 23S rRNA (uracil(1939)-C(5))-methyltransferase RlmD (438 aa).

One can recognise a TRAM domain in the interval 10–68 (RVTTRQTITVKVHDLDSFGQGVAHHNGKALFVQGALPDEVAEVSIIEDKRHFSRGVATR). The [4Fe-4S] cluster site is built by cysteine 81, cysteine 87, cysteine 90, and cysteine 168. S-adenosyl-L-methionine contacts are provided by glutamine 271, phenylalanine 300, asparagine 305, glutamate 321, asparagine 348, and aspartate 369. The active-site Nucleophile is the cysteine 395.

The protein belongs to the class I-like SAM-binding methyltransferase superfamily. RNA M5U methyltransferase family. RlmD subfamily.

The catalysed reaction is uridine(1939) in 23S rRNA + S-adenosyl-L-methionine = 5-methyluridine(1939) in 23S rRNA + S-adenosyl-L-homocysteine + H(+). Functionally, catalyzes the formation of 5-methyl-uridine at position 1939 (m5U1939) in 23S rRNA. The polypeptide is 23S rRNA (uracil(1939)-C(5))-methyltransferase RlmD (Erwinia tasmaniensis (strain DSM 17950 / CFBP 7177 / CIP 109463 / NCPPB 4357 / Et1/99)).